A 462-amino-acid polypeptide reads, in one-letter code: Acetate--CoA ligase [ADP-forming] I subunit alpha (462 aa).

The protein belongs to the acetate CoA ligase alpha subunit family. Heterotetramer of two alpha and two beta subunits.

Its subcellular location is the cytoplasm. It carries out the reaction acetate + ATP + CoA = acetyl-CoA + ADP + phosphate. Its activity is regulated as follows. Activity is dependent on magnesium. Functionally, catalyzes the reversible formation of acetate and ATP from acetyl-CoA by using ADP and phosphate. Can use other substrates such as isobutyryl-CoA, propionyl-CoA and butyryl-CoA, but not indoleacetyl-CoA, phenylacetyl-CoA or succinyl-CoA. Seems to be involved primarily in the conversion of acetyl-CoA to acetate. Participates in the degradation of branched-chain amino acids via branched-chain-acyl-CoA esters. This chain is Acetate--CoA ligase [ADP-forming] I subunit alpha, found in Pyrococcus furiosus (strain ATCC 43587 / DSM 3638 / JCM 8422 / Vc1).